The sequence spans 498 residues: U4/U6 small nuclear ribonucleoprotein Prp31 (498 aa).

Coiled coils occupy residues 84-119 (EAAP…KYSK) and 180-214 (DEEL…MSFI). One can recognise a Nop domain in the interval 214-332 (IAPNLSIIVG…IERKFDKWQE (119 aa)). Residues 333–356 (PPPVKQVKPLPAPLDGQRKKRGGR) form a disordered region. Residues 350-363 (RKKRGGRRYRKMKE) carry the Nuclear localization signal (NLS) motif.

Belongs to the PRP31 family. As to quaternary structure, identified in the spliceosome B complex. Component of the U4/U6-U5 tri-snRNP complex. Component of some MLL1/MLL complex.

The protein localises to the nucleus. Its subcellular location is the nucleus speckle. It is found in the cajal body. Involved in pre-mRNA splicing as component of the spliceosome. Required for the assembly of the U4/U5/U6 tri-snRNP complex, one of the building blocks of the spliceosome. The polypeptide is U4/U6 small nuclear ribonucleoprotein Prp31 (prpf31) (Xenopus tropicalis (Western clawed frog)).